The chain runs to 279 residues: Probable endonuclease 4 (279 aa).

Zn(2+) is bound by residues H67, H107, E144, D177, H180, H214, D227, H229, and E259.

This sequence belongs to the AP endonuclease 2 family. The cofactor is Zn(2+).

It carries out the reaction Endonucleolytic cleavage to 5'-phosphooligonucleotide end-products.. Functionally, endonuclease IV plays a role in DNA repair. It cleaves phosphodiester bonds at apurinic or apyrimidinic (AP) sites, generating a 3'-hydroxyl group and a 5'-terminal sugar phosphate. This Sulfurihydrogenibium sp. (strain YO3AOP1) protein is Probable endonuclease 4.